The sequence spans 363 residues: Cytochrome c oxidase subunit 2 (363 aa).

The segment at 1 to 23 (MTPRGPGRLQRLSQCRPQRGSGG) is disordered. The first 41 residues, 1-41 (MTPRGPGRLQRLSQCRPQRGSGGPARGLRQLALAAMLGALA), serve as a signal peptide directing secretion. 2 helical membrane-spanning segments follow: residues 71–91 (LWIGAVIASLAVGVIVWGLIF) and 118–138 (LVLTVIPFLIISVLFYFTVVV). Cu cation contacts are provided by H254, C295, C299, and H303.

It belongs to the cytochrome c oxidase subunit 2 family. Cu cation serves as cofactor. Heme is required as a cofactor.

It is found in the cell membrane. It carries out the reaction 4 Fe(II)-[cytochrome c] + O2 + 8 H(+)(in) = 4 Fe(III)-[cytochrome c] + 2 H2O + 4 H(+)(out). Functionally, subunits I and II form the functional core of the enzyme complex. Electrons originating in cytochrome c are transferred via heme a and Cu(A) to the binuclear center formed by heme a3 and Cu(B). In Mycobacterium bovis (strain ATCC BAA-935 / AF2122/97), this protein is Cytochrome c oxidase subunit 2 (ctaC).